We begin with the raw amino-acid sequence, 517 residues long: Glucans biosynthesis protein G (517 aa).

Residues 1-28 (MKHKLQMMKMRWLSAAVMLTLYTSSSWA) form the signal peptide.

It belongs to the OpgD/OpgG family.

It localises to the periplasm. Its pathway is glycan metabolism; osmoregulated periplasmic glucan (OPG) biosynthesis. Involved in the biosynthesis of osmoregulated periplasmic glucans (OPGs). This is Glucans biosynthesis protein G from Escherichia coli O1:K1 / APEC.